The chain runs to 491 residues: NADH-quinone oxidoreductase subunit N (491 aa).

14 helical membrane-spanning segments follow: residues 6–26 (TLAP…INWI), 37–57 (VAYP…GMNA), 69–89 (LVVI…GLFV), 103–123 (MFAG…IVMI), 128–148 (FLTL…LVAL), 163–183 (FVLG…MYGA), 206–226 (LAFG…AAPF), 238–258 (PTAV…ALFI), 273–293 (QMML…TAIV), 301–321 (LAYS…SGVV), 335–355 (AMFY…IILL), 379–399 (FAFL…TVGF), 413–433 (GMTW…FYYL), and 458–478 (SMLS…AALM).

This sequence belongs to the complex I subunit 2 family. As to quaternary structure, NDH-1 is composed of 14 different subunits. Subunits NuoA, H, J, K, L, M, N constitute the membrane sector of the complex.

Its subcellular location is the cell inner membrane. It catalyses the reaction a quinone + NADH + 5 H(+)(in) = a quinol + NAD(+) + 4 H(+)(out). In terms of biological role, NDH-1 shuttles electrons from NADH, via FMN and iron-sulfur (Fe-S) centers, to quinones in the respiratory chain. The immediate electron acceptor for the enzyme in this species is believed to be ubiquinone. Couples the redox reaction to proton translocation (for every two electrons transferred, four hydrogen ions are translocated across the cytoplasmic membrane), and thus conserves the redox energy in a proton gradient. The polypeptide is NADH-quinone oxidoreductase subunit N (Cupriavidus taiwanensis (strain DSM 17343 / BCRC 17206 / CCUG 44338 / CIP 107171 / LMG 19424 / R1) (Ralstonia taiwanensis (strain LMG 19424))).